A 355-amino-acid polypeptide reads, in one-letter code: MSPCGRALHTSRGAMAMLARKFPRTRLPVGASALCVVVLCWLYIFPVYRLPNEKEIVQGVLAQRTAWRTNQTSASLFRRQMEDCCDPAHLFAMTKMNSPMGKSLWYDGELLYSFTIDNSTYSLFPQATPFQLPLKKCAVVGNGGILKMSGCGRQIDEANFVMRCNLPPLSSEYTRDVGSKTQLVTANPSIIRQRFENLLWSRKKFVDNMKIYNHSYIYMPAFSMKTGTEPSLRVYYTLKDVGANQTVLFANPNFLRNIGKFWKSRGIHAKRLSTGLFLVSAALGLCEEVSIYGFWPFSVNMQGDPISHHYYDNVLPFSGYHAMPEEFLQLWYLHKIGALRMQLDPCEEPSPQPTS.

Topologically, residues 1–28 (MSPCGRALHTSRGAMAMLARKFPRTRLP) are cytoplasmic. Residues 29–47 (VGASALCVVVLCWLYIFPV) traverse the membrane as a helical; Signal-anchor for type II membrane protein segment. At 48–355 (YRLPNEKEIV…CEEPSPQPTS (308 aa)) the chain is on the lumenal side. N-linked (GlcNAc...) asparagine glycosylation is found at Asn70 and Asn118. Disulfide bonds link Cys137–Cys286 and Cys151–Cys346. Positions 142 and 165 each coordinate CMP-N-acetyl-beta-neuraminate. N-linked (GlcNAc...) asparagine glycosylation is found at Asn213 and Asn244. Positions 273, 274, 275, 295, and 309 each coordinate CMP-N-acetyl-beta-neuraminate. The active-site Proton donor/acceptor is the His321.

It belongs to the glycosyltransferase 29 family.

It is found in the golgi apparatus membrane. It catalyses the reaction an N-acetyl-alpha-neuraminyl-(2-&gt;3)-beta-D-galactosyl derivative + CMP-N-acetyl-beta-neuraminate = an N-acetyl-alpha-neuraminyl-(2-&gt;8)-N-acetyl-alpha-neuraminyl-(2-&gt;3)-beta-D-galactosyl derivative + CMP + H(+). The catalysed reaction is a ganglioside GM3 (d18:1(4E)) + CMP-N-acetyl-beta-neuraminate = a ganglioside GD3 (d18:1(4E)) + CMP + H(+). The enzyme catalyses a ganglioside GD3 (d18:1(4E)) + CMP-N-acetyl-beta-neuraminate = a ganglioside GT3 (d18:1(4E)) + CMP + H(+). It carries out the reaction a ganglioside GD1a (d18:1(4E)) + CMP-N-acetyl-beta-neuraminate = a ganglioside GT1a (d18:1(4E)) + CMP + H(+). It catalyses the reaction a ganglioside GT1b (d18:1(4E)) + CMP-N-acetyl-beta-neuraminate = a ganglioside GQ1b (d18:1(4E)) + CMP + H(+). The catalysed reaction is a ganglioside GM1b (d18:1(4E)) + CMP-N-acetyl-beta-neuraminate = a ganglioside GD1c (d18:1(4E)) + CMP + H(+). The enzyme catalyses a ganglioside GD3 + CMP-N-acetyl-beta-neuraminate = a ganglioside GT3 + CMP + H(+). It carries out the reaction [alpha-N-acetylneuraminyl-(2-&gt;8)](n)-alpha-N-acetylneuraminyl-(2-&gt;8)-alpha-N-acetylneuraminyl-(2-&gt;3)-beta-D-galactosyl-(1-&gt;4)-beta-D-glucosyl-(1&lt;-&gt;1)-ceramide + CMP-N-acetyl-beta-neuraminate = [alpha-N-acetylneuraminyl-(2-&gt;8)](n+1)-alpha-N-acetylneuraminyl-(2-&gt;8)-alpha-N-acetylneuraminyl-(2-&gt;3)-beta-D-galactosyl-(1-&gt;4)-beta-D-glucosyl-(1&lt;-&gt;1)-ceramide + CMP + H(+). It functions in the pathway protein modification; protein glycosylation. The protein operates within lipid metabolism; sphingolipid metabolism. Its function is as follows. Catalyzes the addition of sialic acid in alpha 2,8-linkage to the sialic acid moiety of the ganglioside GM3 to form ganglioside GD3; gangliosides are a subfamily of complex glycosphingolipds that contain one or more residues of sialic acid. Can catalyze the addition of a second alpha-2,8- sialic acid to GD3 to form GT3. Can use GM1b, GD1a and GT1b as acceptor substrates to synthesize GD1c, GT1a and GQ1b respectively. The sequence is that of Alpha-N-acetylneuraminide alpha-2,8-sialyltransferase from Mus musculus (Mouse).